We begin with the raw amino-acid sequence, 100 residues long: Large ribosomal subunit protein uL23 (100 aa).

This sequence belongs to the universal ribosomal protein uL23 family. Part of the 50S ribosomal subunit. Contacts protein L29, and trigger factor when it is bound to the ribosome.

In terms of biological role, one of the early assembly proteins it binds 23S rRNA. One of the proteins that surrounds the polypeptide exit tunnel on the outside of the ribosome. Forms the main docking site for trigger factor binding to the ribosome. This is Large ribosomal subunit protein uL23 from Lactobacillus acidophilus (strain ATCC 700396 / NCK56 / N2 / NCFM).